Consider the following 438-residue polypeptide: Rhomboid-related protein 1 (438 aa).

Residues 1-62 form a disordered region; it reads MGRVEDGGTT…PSQPGPALWS (62 aa). Positions 8 to 17 are enriched in acidic residues; sequence GTTEELEDWD. 7 helical membrane passes run 196–216, 262–282, 284–304, 308–328, 340–359, 372–392, and 405–425; these read PPVF…CYGA, GFNA…HGLL, ISLL…ITDM, VVGG…NVVM, LRMV…AVWL, PSFM…LTIL, and WWVV…WNVF. The active-site Nucleophile is the Ser-312. His-377 is a catalytic residue.

The protein belongs to the peptidase S54 family. As to expression, detected in heart, brain, skeletal muscle and kidney.

It localises to the membrane. The enzyme catalyses Cleaves type-1 transmembrane domains using a catalytic dyad composed of serine and histidine that are contributed by different transmembrane domains.. Functionally, may be involved in regulated intramembrane proteolysis and the subsequent release of functional polypeptides from their membrane anchors. This is Rhomboid-related protein 1 (RHBDL1) from Homo sapiens (Human).